A 1051-amino-acid chain; its full sequence is Carbamoyl phosphate synthase large chain (1051 aa).

The carboxyphosphate synthetic domain stretch occupies residues 1 to 399 (MKETPKKVLV…SLQKAVRMLD (399 aa)). ATP contacts are provided by Arg127, Arg167, Gly173, Gly174, Lys206, Leu208, Glu213, Gly239, Val240, His241, Gln282, and Glu296. In terms of domain architecture, ATP-grasp 1 spans 131–325 (RETMIENNLP…LAYVSAKLAL (195 aa)). Residues Gln282, Glu296, and Asn298 each contribute to the Mg(2+) site. The Mn(2+) site is built by Gln282, Glu296, and Asn298. Residues 400–548 (IGEPGVVGGK…LTYNGTEDDL (149 aa)) are oligomerization domain. The interval 549–930 (EFSQGNKLLM…LKSWLSSIPN (382 aa)) is carbamoyl phosphate synthetic domain. An ATP-grasp 2 domain is found at 673–863 (SKLLDKLGIS…LINESMKAIF (191 aa)). ATP-binding residues include Arg709, Lys748, Ile750, Glu755, Gly779, Val780, His781, Ser782, Gln822, and Glu834. Mg(2+) contacts are provided by Gln822, Glu834, and Asn836. Mn(2+)-binding residues include Gln822, Glu834, and Asn836. The region spanning 930–1051 (NRIPNKNGIA…FEISEYGGGI (122 aa)) is the MGS-like domain. An allosteric domain region spans residues 931–1051 (RIPNKNGIAL…FEISEYGGGI (121 aa)).

It belongs to the CarB family. As to quaternary structure, composed of two chains; the small (or glutamine) chain promotes the hydrolysis of glutamine to ammonia, which is used by the large (or ammonia) chain to synthesize carbamoyl phosphate. Tetramer of heterodimers (alpha,beta)4. Mg(2+) serves as cofactor. Requires Mn(2+) as cofactor.

It carries out the reaction hydrogencarbonate + L-glutamine + 2 ATP + H2O = carbamoyl phosphate + L-glutamate + 2 ADP + phosphate + 2 H(+). The catalysed reaction is hydrogencarbonate + NH4(+) + 2 ATP = carbamoyl phosphate + 2 ADP + phosphate + 2 H(+). Its pathway is amino-acid biosynthesis; L-arginine biosynthesis; carbamoyl phosphate from bicarbonate: step 1/1. The protein operates within pyrimidine metabolism; UMP biosynthesis via de novo pathway; (S)-dihydroorotate from bicarbonate: step 1/3. Large subunit of the glutamine-dependent carbamoyl phosphate synthetase (CPSase). CPSase catalyzes the formation of carbamoyl phosphate from the ammonia moiety of glutamine, carbonate, and phosphate donated by ATP, constituting the first step of 2 biosynthetic pathways, one leading to arginine and/or urea and the other to pyrimidine nucleotides. The large subunit (synthetase) binds the substrates ammonia (free or transferred from glutamine from the small subunit), hydrogencarbonate and ATP and carries out an ATP-coupled ligase reaction, activating hydrogencarbonate by forming carboxy phosphate which reacts with ammonia to form carbamoyl phosphate. The polypeptide is Carbamoyl phosphate synthase large chain (Saccharolobus islandicus (strain M.16.4 / Kamchatka #3) (Sulfolobus islandicus)).